The primary structure comprises 312 residues: Malate dehydrogenase (312 aa).

NAD(+) is bound by residues Gly-7 to Gly-13 and Asp-34. Arg-81 and Arg-87 together coordinate substrate. Residues Asn-94 and Ile-117–Asn-119 each bind NAD(+). Substrate-binding residues include Asn-119 and Arg-153. His-177 (proton acceptor) is an active-site residue. An NAD(+)-binding site is contributed by Met-227.

This sequence belongs to the LDH/MDH superfamily. MDH type 1 family. In terms of assembly, homodimer.

It catalyses the reaction (S)-malate + NAD(+) = oxaloacetate + NADH + H(+). In terms of biological role, catalyzes the reversible oxidation of malate to oxaloacetate. In Photobacterium profundum (strain SS9), this protein is Malate dehydrogenase.